The primary structure comprises 186 residues: MSKNDHRITHNKSDKDNLDDDFSLFRDEVKGVKKLRQDTILHAPNRNPKQKEIRRTEREASDNDFYFSDEFMPHLTDEGPTRYARSDVSKYEVKRLRRGVYVPDVFLDMHGMTQQEAKRELGAMIAYCLKENVHCACVQHGIGKHILKQNVPLWLAQHPDVLAFHQAPLEFGGDGALLVLLSIPEK.

2 stretches are compositionally biased toward basic and acidic residues: residues M1–D16 and K49–A60. Disordered stretches follow at residues M1–D20 and L41–A60. In terms of domain architecture, Smr spans L107–S182.

It belongs to the SmrB family. In terms of assembly, associates with collided ribosomes, but not with correctly translating polysomes.

In terms of biological role, acts as a ribosome collision sensor. Detects stalled/collided disomes (pairs of ribosomes where the leading ribosome is stalled and a second ribosome has collided with it) and endonucleolytically cleaves mRNA at the 5' boundary of the stalled ribosome. Stalled/collided disomes form a new interface (primarily via the 30S subunits) that binds SmrB. Cleaved mRNA becomes available for tmRNA ligation, leading to ribosomal subunit dissociation and rescue of stalled ribosomes. This is Ribosome rescue factor SmrB from Vibrio cholerae serotype O1 (strain ATCC 39541 / Classical Ogawa 395 / O395).